A 510-amino-acid chain; its full sequence is Ribose import ATP-binding protein RbsA 1 (510 aa).

ABC transporter domains lie at 20–256 and 266–510; these read LEMR…VGRD and VTLG…TGNA. 52 to 59 provides a ligand contact to ATP; sequence GENGAGKS.

The protein belongs to the ABC transporter superfamily. Ribose importer (TC 3.A.1.2.1) family. As to quaternary structure, the complex is composed of an ATP-binding protein (RbsA), two transmembrane proteins (RbsC) and a solute-binding protein (RbsB).

It localises to the cell inner membrane. The catalysed reaction is D-ribose(out) + ATP + H2O = D-ribose(in) + ADP + phosphate + H(+). Functionally, part of the ABC transporter complex RbsABC involved in ribose import. Responsible for energy coupling to the transport system. The sequence is that of Ribose import ATP-binding protein RbsA 1 from Agrobacterium fabrum (strain C58 / ATCC 33970) (Agrobacterium tumefaciens (strain C58)).